The primary structure comprises 147 residues: Hemoglobin subunit rho (147 aa).

The Globin domain maps to 3 to 147 (HWSAEEKQLI…VAHALAYKYH (145 aa)). Heme b contacts are provided by histidine 64 and histidine 93.

Belongs to the globin family.

In terms of biological role, the rho chain is the major early embryonic beta-type hemoglobin chain. The protein is Hemoglobin subunit rho of Gallus gallus (Chicken).